Here is an 885-residue protein sequence, read N- to C-terminus: MTTLSPEAFAGHTPMMQQYLRIKADHPDTLVFYRMGDFYELFFEDAEKAARLLDLTLTQRGASAGTPIKMAGVPHHAVEQYLAKLVKMGESVAICEQIGDPATSKGPVERKVVRVVTPGTLTDAALLSDKNDVYLLAMCTGHNKRGVAVNIGLAWLNLASGALRLAEIEPDQLGAALERIRPAEILTADGATDTVPAGAGAIKRVPAWHFDIASGTQRLCDQLDVAGLDGFGAHSLTSACGAAGALLLYAAATQGQQLRHVRSLKVENETEYIGLDPATRRNLELTETLRGTESPTLYSLLDTCCTTMGSRLLRHWLHHPPRASVAAQSRQQAIGALLDAPADASLDALRSALRQIADVERITGRLALLSARPRDLSSLRDTFAALPALRERISAIVANADALTRVDAALAPPAECLDLLTSAIAPEPAAMVRDGGVIARGYDAELDELRDISENCGQFLIDLEARERTRTGIANLRVEYNKVHGFYIEVTRGQTDKVPDDYRRRQTLKNAERYITPELKTFEDKALSAQERALARERALYDGVLQALLPFIPECQRVASALAELDVLAAFAERARTLDWVAPTFTDEIGIEIEQGRHPVVEAQVEQFIANDCRFGAERKLLLITGPNMGGKSTFMRQTALIALMAYVGSYVPAKSACFGPIDRIFTRIGAADDLAGGRSTFMVEMTEAAAILNDATPQSLVLMDEIGRGTSTFDGLALAWAIARHLLAQNGCYTLFATHYFELTQLPAEFPQAANVHLSAVEHGHGIVFLHAVNEGPANQSYGLQVAQLAGVPAPVIRAARKHLAYLEQQSATQNTPQLDLFSAPPAAADELECADAPAVSAIPHPALEKLRDIDPDDLKPRDALDLLYELRTLVRSHDADGHA.

626–633 contacts ATP; it reads GPNMGGKS.

It belongs to the DNA mismatch repair MutS family.

Its function is as follows. This protein is involved in the repair of mismatches in DNA. It is possible that it carries out the mismatch recognition step. This protein has a weak ATPase activity. This is DNA mismatch repair protein MutS from Burkholderia ambifaria (strain MC40-6).